The sequence spans 54 residues: Ductus ejaculatorius peptide 99B (54 aa).

A signal peptide spans 1–21 (MKTPLFLLLVVLASLLGLALS). Gln-22 is modified (pyrrolidone carboxylic acid). N-linked (GlcNAc...) asparagine glycosylation occurs at Asn-25. Residues Cys-40 and Cys-52 are joined by a disulfide bond. A propeptide spanning residues 53 to 54 (RK) is cleaved from the precursor.

The protein to paragonial peptide B. As to expression, ductus ejaculatorius.

The protein resides in the secreted. In terms of biological role, induces post-mating responses; increased oviposition and reduced receptivity. The chain is Ductus ejaculatorius peptide 99B (Dup99B) from Drosophila melanogaster (Fruit fly).